A 229-amino-acid polypeptide reads, in one-letter code: Uracil-DNA glycosylase (229 aa).

The active-site Proton acceptor is the aspartate 65.

This sequence belongs to the uracil-DNA glycosylase (UDG) superfamily. UNG family.

It localises to the cytoplasm. The catalysed reaction is Hydrolyzes single-stranded DNA or mismatched double-stranded DNA and polynucleotides, releasing free uracil.. Functionally, excises uracil residues from the DNA which can arise as a result of misincorporation of dUMP residues by DNA polymerase or due to deamination of cytosine. The chain is Uracil-DNA glycosylase from Limosilactobacillus fermentum (strain NBRC 3956 / LMG 18251) (Lactobacillus fermentum).